The sequence spans 578 residues: Leucine-rich repeat-containing protein 15 (578 aa).

An N-terminal signal peptide occupies residues 1 to 21; sequence MPLKHYLLLLVGCQAWALGLA. One can recognise an LRRNT domain in the interval 22 to 53; it reads YYGCPSECTCSRASQVECTGARIVAMPTPLPW. The Extracellular segment spans residues 22–535; that stretch reads YYGCPSECTC…TWGMTEAQSG (514 aa). 15 LRR repeats span residues 54 to 75, 78 to 99, 102 to 123, 126 to 147, 150 to 171, 174 to 195, 198 to 219, 222 to 243, 246 to 267, 270 to 291, 294 to 315, 318 to 339, 342 to 363, 366 to 387, and 390 to 411; these read NAMS…LFLN, ALIA…AFRN, SLRY…VFQD, NLES…QFSQ, NLRE…AFDH, GLTK…LFQH, NLQV…TFDA, NLQE…LFHN, NLQR…IFMQ, QLNK…VFGP, NLRE…TFSH, QLQV…AFNG, NLRE…VFRS, NLQN…IFAN, and GLTT…IFDH. An N-linked (GlcNAc...) asparagine glycan is attached at Asn75. Asn369 is a glycosylation site (N-linked (GlcNAc...) asparagine). The region spanning 423–473 is the LRRCT domain; sequence NPWRCDSDILPLHNWLLLNRARLGTDTLPVCSSPANVRGQSLVIININFPG. Residues 476–500 form a disordered region; that stretch reads VQGPETPEVPSYPDTPSYPDTTSVS. A helical membrane pass occupies residues 536 to 556; that stretch reads LAIAAIVIGIIALACSLAACI. Residues 557–578 lie on the Cytoplasmic side of the membrane; that stretch reads CCCCCKKRSQAVLMQMKAPNEC.

The protein resides in the cell membrane. This chain is Leucine-rich repeat-containing protein 15 (Lrrc15), found in Rattus norvegicus (Rat).